Consider the following 390-residue polypeptide: LL-diaminopimelate aminotransferase (390 aa).

Residues Tyr-13, Gly-38, Lys-102, Tyr-126, and Asn-176 each contribute to the substrate site. Pyridoxal 5'-phosphate-binding positions include 101-102 (SK), Tyr-126, Asn-176, Tyr-207, and 235-237 (SVS). N6-(pyridoxal phosphate)lysine is present on Lys-238. Arg-246 is a binding site for pyridoxal 5'-phosphate. Residue Arg-364 coordinates substrate.

The protein belongs to the class-I pyridoxal-phosphate-dependent aminotransferase family. LL-diaminopimelate aminotransferase subfamily. Homodimer. Pyridoxal 5'-phosphate is required as a cofactor.

It carries out the reaction (2S,6S)-2,6-diaminopimelate + 2-oxoglutarate = (S)-2,3,4,5-tetrahydrodipicolinate + L-glutamate + H2O + H(+). It functions in the pathway amino-acid biosynthesis; L-lysine biosynthesis via DAP pathway; LL-2,6-diaminopimelate from (S)-tetrahydrodipicolinate (aminotransferase route): step 1/1. In terms of biological role, involved in the synthesis of meso-diaminopimelate (m-DAP or DL-DAP), required for both lysine and peptidoglycan biosynthesis. Catalyzes the direct conversion of tetrahydrodipicolinate to LL-diaminopimelate. Is also able to catalyze the reverse reaction in vitro, i.e. the transamination of LL-diaminopimelate with 2-oxoglutarate to produce tetrahydrodipicolinate and glutamate. Can also use m-DAP instead of LL-DAP as the amino-group donor, and oxaloacetate instead of 2-oxoglutarate as the amino-group acceptor. In Moorella thermoacetica (strain ATCC 39073 / JCM 9320), this protein is LL-diaminopimelate aminotransferase.